The primary structure comprises 173 residues: ATP synthase subunit b (173 aa).

The chain crosses the membrane as a helical span at residues 19–39 (IVWSLIILVIVAVFFYKFFMP).

The protein belongs to the ATPase B chain family. F-type ATPases have 2 components, F(1) - the catalytic core - and F(0) - the membrane proton channel. F(1) has five subunits: alpha(3), beta(3), gamma(1), delta(1), epsilon(1). F(0) has three main subunits: a(1), b(2) and c(10-14). The alpha and beta chains form an alternating ring which encloses part of the gamma chain. F(1) is attached to F(0) by a central stalk formed by the gamma and epsilon chains, while a peripheral stalk is formed by the delta and b chains.

The protein resides in the cell membrane. Functionally, f(1)F(0) ATP synthase produces ATP from ADP in the presence of a proton or sodium gradient. F-type ATPases consist of two structural domains, F(1) containing the extramembraneous catalytic core and F(0) containing the membrane proton channel, linked together by a central stalk and a peripheral stalk. During catalysis, ATP synthesis in the catalytic domain of F(1) is coupled via a rotary mechanism of the central stalk subunits to proton translocation. Component of the F(0) channel, it forms part of the peripheral stalk, linking F(1) to F(0). This chain is ATP synthase subunit b, found in Bifidobacterium longum (strain NCC 2705).